The chain runs to 284 residues: Acetyl-coenzyme A carboxylase carboxyl transferase subunit beta (284 aa).

The region spanning 25–284 (LWVKCPETGA…LCKILTKSVQ (260 aa)) is the CoA carboxyltransferase N-terminal domain.

This sequence belongs to the AccD/PCCB family. Acetyl-CoA carboxylase is a heterohexamer composed of biotin carboxyl carrier protein (AccB), biotin carboxylase (AccC) and two subunits each of ACCase subunit alpha (AccA) and ACCase subunit beta (AccD).

The protein localises to the cytoplasm. It catalyses the reaction N(6)-carboxybiotinyl-L-lysyl-[protein] + acetyl-CoA = N(6)-biotinyl-L-lysyl-[protein] + malonyl-CoA. Its pathway is lipid metabolism; malonyl-CoA biosynthesis; malonyl-CoA from acetyl-CoA: step 1/1. In terms of biological role, component of the acetyl coenzyme A carboxylase (ACC) complex. Biotin carboxylase (BC) catalyzes the carboxylation of biotin on its carrier protein (BCCP) and then the CO(2) group is transferred by the transcarboxylase to acetyl-CoA to form malonyl-CoA. This is Acetyl-coenzyme A carboxylase carboxyl transferase subunit beta from Liberibacter asiaticus (strain psy62).